A 357-amino-acid chain; its full sequence is Spore coat protein I (357 aa).

The protein belongs to the CotS family.

It localises to the spore coat. This Bacillus subtilis (strain 168) protein is Spore coat protein I (cotI).